Consider the following 465-residue polypeptide: CUGBP Elav-like family member 3 (465 aa).

2 consecutive RRM domains span residues 7–88 and 95–174; these read IKLF…PADS and KLFV…FADT. 2 disordered regions span residues 283-311 and 345-379; these read PVPTQPTGQPAPDALYPNGVHPYPAQSPA and PPALVAQQPPPPPQQQQQQQQQQQQQQQQREGPDG. Residues 345–358 show a composition bias toward pro residues; the sequence is PPALVAQQPPPPPQ. The segment covering 359 to 373 has biased composition (low complexity); that stretch reads QQQQQQQQQQQQQQQ. The 79-residue stretch at 380-458 folds into the RRM 3 domain; the sequence is CNIFIYHLPQ…KRLKVQLKRP (79 aa).

It belongs to the CELF/BRUNOL family.

The protein resides in the nucleus. It localises to the cytoplasm. RNA-binding protein involved in the regulation of pre-mRNA alternative splicing. Mediates exon inclusion and/or exclusion in pre-mRNA that are subject to tissue-specific and developmentally regulated alternative splicing. Specifically activates exon 5 inclusion of cardiac isoforms of TNNT2 during heart remodeling at the juvenile to adult transition. Activates the splicing of MAPT/Tau exon 10. Binds to muscle-specific splicing enhancer (MSE) intronic sites flanking the alternative exon 5 of TNNT2 pre-mRNA. This chain is CUGBP Elav-like family member 3 (Celf3), found in Mus musculus (Mouse).